The sequence spans 220 residues: Probable 26S proteasome regulatory subunit p27 (220 aa).

One can recognise a PDZ domain in the interval A119–I196.

Belongs to the proteasome subunit p27 family. In terms of assembly, part of a transient complex containing NAS2, RPT4 and RPT5 formed during the assembly of the 26S proteasome.

In terms of biological role, acts as a chaperone during the assembly of the 26S proteasome, specifically of the base subcomplex of the 19S regulatory complex (RC). During the base subcomplex assembly is part of a NAS2:RPT4:RPT5 module; NAS2 is released during the further base assembly process. In Saccharomyces cerevisiae (strain ATCC 204508 / S288c) (Baker's yeast), this protein is Probable 26S proteasome regulatory subunit p27 (NAS2).